The chain runs to 123 residues: Histone H2B (123 aa).

Residues 1-32 (MPPKAASKGAKKAASKAKAARSTDKKKRRRRR) are disordered. Residues 9–32 (GAKKAASKAKAARSTDKKKRRRRR) show a composition bias toward basic residues. An O-linked (GlcNAc) serine glycan is attached at S110. Residue K118 forms a Glycyl lysine isopeptide (Lys-Gly) (interchain with G-Cter in ubiquitin) linkage.

It belongs to the histone H2B family. In terms of assembly, the nucleosome is a histone octamer containing two molecules each of H2A, H2B, H3 and H4 assembled in one H3-H4 heterotetramer and two H2A-H2B heterodimers. The octamer wraps approximately 147 bp of DNA. In terms of processing, monoubiquitination of Lys-118 gives a specific tag for epigenetic transcriptional activation and is also prerequisite for histone H3 'Lys-4' and 'Lys-79' methylation.

The protein resides in the nucleus. The protein localises to the chromosome. Its function is as follows. Core component of nucleosome. Nucleosomes wrap and compact DNA into chromatin, limiting DNA accessibility to the cellular machineries which require DNA as a template. Histones thereby play a central role in transcription regulation, DNA repair, DNA replication and chromosomal stability. DNA accessibility is regulated via a complex set of post-translational modifications of histones, also called histone code, and nucleosome remodeling. This chain is Histone H2B, found in Urechis caupo (Innkeeper worm).